A 962-amino-acid polypeptide reads, in one-letter code: pH-response regulator protein palF/prr-3 (962 aa).

Disordered regions lie at residues 1–43 (MGPF…DSST), 225–326 (APPK…THPS), 568–675 (TDSN…PDEN), and 689–962 (RLLP…RYER). Residues 237–246 (ISKRAKKKRP) are compositionally biased toward basic residues. Polar residues-rich tracts occupy residues 297-307 (GFSQAPRSVSH), 314-326 (SGDS…THPS), and 581-596 (PSLT…SNYV). Low complexity-rich tracts occupy residues 696–722 (PIAA…PDSS) and 738–747 (PTPAATPATA). Basic and acidic residues predominate over residues 793-805 (TEDKQELERRRLL). Residues 830-839 (AGPSGSRAGP) show a composition bias toward low complexity. Over residues 840 to 849 (SAPPPAPPVA) the composition is skewed to pro residues. A compositionally biased stretch (low complexity) spans 913-928 (PSSPVLAPASAFFPAS). Positions 929–949 (GSGNVHDSPREQGQQARSDSS) are enriched in polar residues.

This sequence belongs to the arrestin family. PalF/RIM8 subfamily.

Its function is as follows. Required for the proteolytic cleavage of the transcription factor pacc-1 in response to alkaline ambient pH. The chain is pH-response regulator protein palF/prr-3 (prr-3) from Neurospora crassa (strain ATCC 24698 / 74-OR23-1A / CBS 708.71 / DSM 1257 / FGSC 987).